A 227-amino-acid polypeptide reads, in one-letter code: Probable methylthioribulose-1-phosphate dehydratase (227 aa).

Cysteine 87 contributes to the substrate binding site. Histidine 105 and histidine 107 together coordinate Zn(2+). Residue glutamate 129 is the Proton donor/acceptor of the active site. Histidine 185 lines the Zn(2+) pocket.

This sequence belongs to the aldolase class II family. MtnB subfamily. It depends on Zn(2+) as a cofactor.

The protein resides in the cytoplasm. It carries out the reaction 5-(methylsulfanyl)-D-ribulose 1-phosphate = 5-methylsulfanyl-2,3-dioxopentyl phosphate + H2O. It participates in amino-acid biosynthesis; L-methionine biosynthesis via salvage pathway; L-methionine from S-methyl-5-thio-alpha-D-ribose 1-phosphate: step 2/6. Catalyzes the dehydration of methylthioribulose-1-phosphate (MTRu-1-P) into 2,3-diketo-5-methylthiopentyl-1-phosphate (DK-MTP-1-P). The chain is Probable methylthioribulose-1-phosphate dehydratase from Drosophila mojavensis (Fruit fly).